A 315-amino-acid polypeptide reads, in one-letter code: MAATSLTAPPSFSGLRRISPKLDAAAVSSHQSFFHRVNSSTRLVSSSSSSHRSPRGVVAMAGSGKFFVGGNWKCNGTKDSIAKLISDLNSATLEADVDVVVSPPFVYIDQVKSSLTDRIDISGQNSWVGKGGAFTGEISVEQLKDLGCKWVILGHSERRHVIGEKDEFIGKKAAYALSEGLGVIACIGEKLEEREAGKTFDVCFAQLKAFADAVPSWDNIVVAYEPVWAIGTGKVASPQQAQEVHVAVRGWLKKNVSEEVASKTRIIYGGSVNGGNSAELAKEEDIDGFLVGGASLKGPEFATIVNSVTSKKVAA.

The N-terminal 60 residues, 1-60 (MAATSLTAPPSFSGLRRISPKLDAAAVSSHQSFFHRVNSSTRLVSSSSSSHRSPRGVVAM), are a transit peptide targeting the chloroplast. Substrate contacts are provided by Asn-71 and Lys-73. The active-site Electrophile is His-155. A Phosphoserine modification is found at Ser-178. Glu-225 (proton acceptor) is an active-site residue.

This sequence belongs to the triosephosphate isomerase family. In terms of assembly, homodimer.

It localises to the plastid. Its subcellular location is the chloroplast. It carries out the reaction D-glyceraldehyde 3-phosphate = dihydroxyacetone phosphate. It functions in the pathway carbohydrate biosynthesis; Calvin cycle. This chain is Triosephosphate isomerase, chloroplastic (TIM), found in Arabidopsis thaliana (Mouse-ear cress).